We begin with the raw amino-acid sequence, 145 residues long: MPRHTSAHKRKPSTPRRRSPPASLPPPAGSRTRRHSGPSGSSPRKKHKFRPGTRALMEIRKYQKSTGLLLRKAPFSRLVREVCQMFSREHMMWQGYALMALQEAAEAFMVRLFSDANLCAIHAKRVTLFPRDIQLARRIRGVEHM.

Residues 1 to 19 (MPRHTSAHKRKPSTPRRRS) are compositionally biased toward basic residues. The disordered stretch occupies residues 1-54 (MPRHTSAHKRKPSTPRRRSPPASLPPPAGSRTRRHSGPSGSSPRKKHKFRPGTR). Ser-19 carries the phosphoserine modification. Residues 51–145 (PGTRALMEIR…ARRIRGVEHM (95 aa)) form an H3-like region.

The protein belongs to the histone H3 family. In terms of assembly, component of centromeric nucleosomes, where DNA is wrapped around a histone octamer core. The octamer contains two molecules each of H2A, H2B, CENPA and H4 assembled in one CENPA-H4 heterotetramer and two H2A-H2B heterodimers. CENPA modulates the DNA-binding characteristics of nucleosomes so that protruding DNA ends have higher flexibility than in nucleosomes containing conventional histone H3.

The protein resides in the nucleus. It localises to the chromosome. It is found in the centromere. In terms of biological role, histone H3-like nucleosomal protein that is specifically found in centromeric nucleosomes. Replaces conventional H3 in the nucleosome core of centromeric chromatin that serves as an assembly site for the inner kinetochore. The presence of CENPA subtly modifies the nucleosome structure and the way DNA is wrapped around the nucleosome and gives rise to protruding DNA ends that are less well-ordered and rigid compared to nucleosomes containing histone H3. May serve as an epigenetic mark that propagates centromere identity through replication and cell division. Required for recruitment and assembly of kinetochore proteins, and as a consequence required for progress through mitosis, chromosome segregation and cytokinesis. The sequence is that of Histone H3-like centromeric protein A (cenpa) from Danio rerio (Zebrafish).